A 375-amino-acid chain; its full sequence is Growth/differentiation factor 8 (375 aa).

An N-terminal signal peptide occupies residues Met-1–Ala-18. A propeptide spanning residues Gly-19–Arg-266 is cleaved from the precursor. Asn-71 is a glycosylation site (N-linked (GlcNAc...) asparagine). Disulfide bonds link Cys-272/Cys-282, Cys-281/Cys-340, Cys-309/Cys-372, and Cys-313/Cys-374.

Belongs to the TGF-beta family. Homodimer; disulfide-linked. Interacts with WFIKKN2, leading to inhibit its activity. Interacts with FSTL3. Post-translationally, synthesized as large precursor molecule that undergoes proteolytic cleavage to generate an N-terminal propeptide and a disulfide linked C-terminal dimer, which is the biologically active molecule. The circulating form consists of a latent complex of the C-terminal dimer and other proteins, including its propeptide, which maintain the C-terminal dimer in a latent, inactive state. Ligand activation requires additional cleavage of the prodomain by a tolloid-like metalloproteinase.

Its subcellular location is the secreted. Functionally, acts specifically as a negative regulator of skeletal muscle growth. This Equus caballus (Horse) protein is Growth/differentiation factor 8 (MSTN).